We begin with the raw amino-acid sequence, 513 residues long: uncharacterized protein (513 aa).

The segment covering 1-16 has biased composition (basic and acidic residues); that stretch reads MPREHDSKYHRERDMR. Residues 1-21 are disordered; the sequence is MPREHDSKYHRERDMRSGLQE.

This is an uncharacterized protein from Sinorhizobium fredii (strain NBRC 101917 / NGR234).